Reading from the N-terminus, the 180-residue chain is ATP synthase subunit delta (180 aa).

Belongs to the ATPase delta chain family. As to quaternary structure, F-type ATPases have 2 components, F(1) - the catalytic core - and F(0) - the membrane proton channel. F(1) has five subunits: alpha(3), beta(3), gamma(1), delta(1), epsilon(1). F(0) has three main subunits: a(1), b(2) and c(10-14). The alpha and beta chains form an alternating ring which encloses part of the gamma chain. F(1) is attached to F(0) by a central stalk formed by the gamma and epsilon chains, while a peripheral stalk is formed by the delta and b chains.

Its subcellular location is the cell membrane. In terms of biological role, f(1)F(0) ATP synthase produces ATP from ADP in the presence of a proton or sodium gradient. F-type ATPases consist of two structural domains, F(1) containing the extramembraneous catalytic core and F(0) containing the membrane proton channel, linked together by a central stalk and a peripheral stalk. During catalysis, ATP synthesis in the catalytic domain of F(1) is coupled via a rotary mechanism of the central stalk subunits to proton translocation. Functionally, this protein is part of the stalk that links CF(0) to CF(1). It either transmits conformational changes from CF(0) to CF(1) or is implicated in proton conduction. The sequence is that of ATP synthase subunit delta from Mycoplasma mobile (strain ATCC 43663 / 163K / NCTC 11711) (Mesomycoplasma mobile).